The sequence spans 316 residues: Glutathione synthetase (316 aa).

An ATP-grasp domain is found at 124 to 311 (NEKLAALLFP…IAGLLFDAIE (188 aa)). 151 to 208 (FVLEHGQAVLKPLDGMGGRSIFRSGSGDPNLNVILETLTDGNRKLTLAQRFIPDITAG) is a binding site for ATP. Mg(2+)-binding residues include glutamate 282 and asparagine 284.

It belongs to the prokaryotic GSH synthase family. Mg(2+) serves as cofactor. Mn(2+) is required as a cofactor.

It catalyses the reaction gamma-L-glutamyl-L-cysteine + glycine + ATP = glutathione + ADP + phosphate + H(+). Its pathway is sulfur metabolism; glutathione biosynthesis; glutathione from L-cysteine and L-glutamate: step 2/2. The chain is Glutathione synthetase from Xanthomonas axonopodis pv. citri (strain 306).